A 277-amino-acid polypeptide reads, in one-letter code: MSVPTVLERIVARKFQEVAERSARVSLAEMEHLAKGADAPRGFANALIEQAKRKQPAVIAEIKKASPSKGVIRENFVPSEIAVSYEKGGATCLSVLTDVDYFQGADEYLQQARAAVSLPVIRKDFMVDPYQIIEARALGADCVLLIVSALDDVKMAELAATAKEVGLDVLVEVHDGDELERALKTLDTPLVGVNNRNLHTFEVSLETTLDLLPRIPRDRLAITESGILNRADVELMEINDVYSFLVGEAFMRAEQPGLELQRLFFPEQVKKTVQQLD.

This sequence belongs to the TrpC family.

It catalyses the reaction 1-(2-carboxyphenylamino)-1-deoxy-D-ribulose 5-phosphate + H(+) = (1S,2R)-1-C-(indol-3-yl)glycerol 3-phosphate + CO2 + H2O. It participates in amino-acid biosynthesis; L-tryptophan biosynthesis; L-tryptophan from chorismate: step 4/5. In Pseudomonas putida (strain W619), this protein is Indole-3-glycerol phosphate synthase.